We begin with the raw amino-acid sequence, 315 residues long: C1GALT1-specific chaperone 1-like protein (315 aa).

Residues 1–8 lie on the Cytoplasmic side of the membrane; it reads MVSASGTS. Residues 9–29 form a helical; Signal-anchor for type II membrane protein membrane-spanning segment; it reads FFKGMLLGSISWVLITMFGQI. Topologically, residues 30–315 are lumenal; sequence HIRHRGQTQD…FLPPVGSEND (286 aa). Asparagine 55 and asparagine 301 each carry an N-linked (GlcNAc...) asparagine glycan.

It belongs to the glycosyltransferase 31 family. Beta3-Gal-T subfamily.

The protein localises to the membrane. This Homo sapiens (Human) protein is C1GALT1-specific chaperone 1-like protein.